Reading from the N-terminus, the 652-residue chain is Spermatogenesis-associated protein 13 (652 aa).

Positions 1-24 (MTSASPEDQNAPVGCPKGARRRRP) are disordered. The residue at position 78 (serine 78) is a Phosphoserine. Residues 81–108 (IGLDRVGRRRQMRASNVSSDGGTEPSAL) form a disordered region. An ABR (APC-binding region) domain region spans residues 98 to 150 (SSDGGTEPSALVDDNGSEEDFSYEDLCQASPRYLQPGGEQLAINELISDGNVV). A Phosphoserine modification is found at serine 114. Residues 147–206 (GNVVCAEALWDHVTMDDQELGFKAGDVIQVLEASNKDWWWGRSEDKEAWFPASFVRLRVN) form the SH3 domain. A disordered region spans residues 209-235 (ELSENSSSTPSEEQDEEASQSRHRHCE). Positions 240-424 (MRTNVIREIM…KNVACLINER (185 aa)) constitute a DH domain. One can recognise a PH domain in the interval 455–561 (ELIHSGELTK…WLQACADERR (107 aa)). The tract at residues 561–652 (RRVQEDKEMG…TFNRLTPFRK (92 aa)) is C-terminal tail.

As to quaternary structure, interacts (via ABR and SH3 domain) with APC. The binding of APC enhances its GEF activity by relieving it from an autoinhibitory conformation, in which the ABR and SH3 domains are associated with the C-terminal tail. Interacts (via C-terminal tail) with PPP1R9B (via C-terminus). Interacts with RAC1. Expressed at high levels in the placenta, spleen and kidney, at moderate levels in lung, small intestine, liver, brain and heart, and at low levels in skeletal muscle. Expression is aberrantly enhanced in most colorectal tumors.

It is found in the cytoplasm. It localises to the cell projection. Its subcellular location is the filopodium. The protein localises to the lamellipodium. The protein resides in the ruffle membrane. It is found in the podosome. Both the ABR and the SH3 domains contribute to maintaining the protein in an inhibited conformation by associating with the C-terminal tail. Binding of these domains to the C-terminal tail inhibits the activity of the protein by blocking a region that is required for its GEF activity. Acts as a guanine nucleotide exchange factor (GEF) for RHOA, RAC1 and CDC42 GTPases. Regulates cell migration and adhesion assembly and disassembly through a RAC1, PI3K, RHOA and AKT1-dependent mechanism. Increases both RAC1 and CDC42 activity, but decreases the amount of active RHOA. Required for MMP9 up-regulation via the JNK signaling pathway in colorectal tumor cells. Involved in tumor angiogenesis and may play a role in intestinal adenoma formation and tumor progression. The sequence is that of Spermatogenesis-associated protein 13 from Homo sapiens (Human).